The chain runs to 55 residues: Small ribosomal subunit protein bS21 (55 aa).

Belongs to the bacterial ribosomal protein bS21 family.

The protein is Small ribosomal subunit protein bS21 of Phytoplasma mali (strain AT).